Consider the following 205-residue polypeptide: Putative 3-methyladenine DNA glycosylase (205 aa).

It belongs to the DNA glycosylase MPG family.

The chain is Putative 3-methyladenine DNA glycosylase from Bacillus cereus (strain Q1).